The primary structure comprises 101 residues: Large ribosomal subunit protein uL24 (101 aa).

The protein belongs to the universal ribosomal protein uL24 family. Part of the 50S ribosomal subunit.

Functionally, one of two assembly initiator proteins, it binds directly to the 5'-end of the 23S rRNA, where it nucleates assembly of the 50S subunit. One of the proteins that surrounds the polypeptide exit tunnel on the outside of the subunit. The polypeptide is Large ribosomal subunit protein uL24 (Lactococcus lactis subsp. lactis (strain IL1403) (Streptococcus lactis)).